The chain runs to 1121 residues: Potassium channel subfamily U member 1 (1121 aa).

The Extracellular segment spans residues 1-24; sequence MSQTLLDSLNQKELTETSCTIEIQ. A helical membrane pass occupies residues 25–45; sequence AAFILSSLATFFGGLIILFLF. Over 46-101 the chain is Cytoplasmic; sequence RIALKSSRSWKYVKGPRGLLELFSSRRIEANPLRKLYFHGVFRQRIEMLLSAQTVV. A helical transmembrane segment spans residues 102–122; it reads GQVLVILVFVLSIGSLVIYFI. Residues 123 to 137 are Extracellular-facing; sequence NSMDPVRRCSSYEDK. Residues 138-158 form a helical membrane-spanning segment; it reads IVHVDLSFNAFFSFYFGLRFW. Residues 159–165 are Cytoplasmic-facing; sequence AAEDKIK. The helical transmembrane segment at 166 to 186 threads the bilayer; sequence FWLEMNSIVDIFTIPPTFISY. At 187–188 the chain is on the extracellular side; that stretch reads YL. Residues 189 to 209 traverse the membrane as a helical; Voltage-sensor segment; it reads KSNWLGLRFLRALRLLELPKI. At 210-226 the chain is on the cytoplasmic side; the sequence is LQILQVIKTSNSVKLSK. Residues 227–247 traverse the membrane as a helical segment; the sequence is LLSIVISTWFTAAGFLHLVEN. At 248–259 the chain is on the extracellular side; sequence SGDPWLNGRNSQ. Residues 260-282 constitute an intramembrane region (pore-forming); it reads TMSYFESIYLVTATMSTVGFGDV. A Selectivity for potassium motif is present at residues 276 to 279; it reads TVGF. Over 283–290 the chain is Extracellular; sequence VAKTSLGR. The helical transmembrane segment at 291-311 threads the bilayer; the sequence is IFIVFFTLGSLILFANYIPEM. Residues 312–1121 lie on the Cytoplasmic side of the membrane; sequence VELFSTRKKY…LDASDIVQEK (810 aa). RCK N-terminal domains lie at 331–473 and 718–889; these read KKFI…DNIL and QNHI…DGML. 2 disordered regions span residues 836–858 and 1052–1076; these read SPTPGSSKSEVKPSSAFDSKERK and DSSPSIQAQNNSTNATTPLAQGSNF.

Belongs to the potassium channel family. Calcium-activated (TC 1.A.1.3) subfamily. KCa5.1/KCNU1 sub-subfamily. Homotetramer; which constitutes the calcium-activated potassium channel. Interact with LRRC52; this interaction changes some channel gating properties, such as shifting gating to more negative potentials at a given pH. Testis-specific. Mainly expressed in spermatocytes. As to expression, expressed in testis, brain, eye and kidney.

It localises to the cell membrane. Its subcellular location is the cytoplasm. It carries out the reaction K(+)(in) = K(+)(out). Its activity is regulated as follows. Regulated by changes in cytosolic pH; activated by alkalization. In contrast to human KCNU1 is not activated by Ca(2+) or Mg(2+). The auxiliary subunit LRRC52 shifts the activation of KCNU1 to more negative potentials at a given pH. Its function is as follows. Testis-specific potassium channel activated by both intracellular pH and membrane voltage that mediates export of K(+). Represents the primary spermatozoan K(+) current. The channel underlies a pH-triggered membrane hyperpolarization during the process of sperm capacitation, as sperm encounter the alkaline environment near the ovum in the female reproductive tract, thereby playing an essential for male fertility. The sequence is that of Potassium channel subfamily U member 1 (Kcnu1) from Mus musculus (Mouse).